Reading from the N-terminus, the 469-residue chain is 3-isopropylmalate dehydratase large subunit (469 aa).

[4Fe-4S] cluster is bound by residues Cys-347, Cys-408, and Cys-411.

The protein belongs to the aconitase/IPM isomerase family. LeuC type 1 subfamily. In terms of assembly, heterodimer of LeuC and LeuD. The cofactor is [4Fe-4S] cluster.

It carries out the reaction (2R,3S)-3-isopropylmalate = (2S)-2-isopropylmalate. The protein operates within amino-acid biosynthesis; L-leucine biosynthesis; L-leucine from 3-methyl-2-oxobutanoate: step 2/4. Functionally, catalyzes the isomerization between 2-isopropylmalate and 3-isopropylmalate, via the formation of 2-isopropylmaleate. In Actinobacillus succinogenes (strain ATCC 55618 / DSM 22257 / CCUG 43843 / 130Z), this protein is 3-isopropylmalate dehydratase large subunit.